Reading from the N-terminus, the 315-residue chain is Olfactory receptor 11A1 (315 aa).

At 1 to 27 (MEIVSTGNETITEFVLLGFYDIPELHF) the chain is on the extracellular side. A glycan (N-linked (GlcNAc...) asparagine) is linked at N8. The helical transmembrane segment at 28-48 (LFFIVFTAVYVFIIIGNMLII) threads the bilayer. Residues 49–56 (VAVVSSQR) are Cytoplasmic-facing. Residues 57–77 (LHKPMYIFLANLSFLDILYTS) traverse the membrane as a helical segment. Topologically, residues 78-100 (AVMPKMLEGFLQEATISVAGCLL) are extracellular. C98 and C190 are oxidised to a cystine. The chain crosses the membrane as a helical span at residues 101-121 (QFFIFGSLATAECLLLAVMAY). Over 122-140 (DRYLAICYPLHYPLLMGPR) the chain is Cytoplasmic. A helical transmembrane segment spans residues 141–161 (RYMGLVVTTWLSGFVVDGLVV). The Extracellular portion of the chain corresponds to 162–198 (ALVAQLRFCGPNHIDQFYCDFMLFVGLACSDPRVAQV). A helical membrane pass occupies residues 199–218 (TTLILSVFCLTIPFGLILTS). Topologically, residues 219-238 (YARIVVAVLRVPAGASRRRA) are cytoplasmic. Residues 239–259 (FSTCSSHLAVVTTFYGTLMIF) form a helical membrane-spanning segment. Over 260–272 (YVAPSAVHSQLLS) the chain is Extracellular. Residues 273 to 293 (KVFSLLYTVVTPLFNPVIYTM) form a helical membrane-spanning segment. At 294–315 (RNKEVHQALRKILCIKQTETLD) the chain is on the cytoplasmic side.

This sequence belongs to the G-protein coupled receptor 1 family.

It is found in the cell membrane. In terms of biological role, odorant receptor. The chain is Olfactory receptor 11A1 (OR11A1) from Homo sapiens (Human).